An 80-amino-acid polypeptide reads, in one-letter code: Small membrane A-kinase anchor protein (80 aa).

Gly2 is lipidated: N-myristoyl glycine.

Belongs to the small membrane AKAP family. In terms of processing, may be palmitoylated at Cys-3.

Its subcellular location is the cell membrane. Functionally, binds to type I regulatory subunits of protein kinase A and may anchor/target them to the plasma membrane. The sequence is that of Small membrane A-kinase anchor protein from Tetraodon nigroviridis (Spotted green pufferfish).